A 312-amino-acid polypeptide reads, in one-letter code: RNA-binding protein Raly (312 aa).

S2 is modified (N-acetylserine). K4 is covalently cross-linked (Glycyl lysine isopeptide (Lys-Gly) (interchain with G-Cter in SUMO2)). An RRM domain is found at 21-92 (SRVFIGNLNT…QTLDINMAGE (72 aa)). K44 carries the post-translational modification N6-acetyllysine. Residues K94 and K99 each participate in a glycyl lysine isopeptide (Lys-Gly) (interchain with G-Cter in SUMO2) cross-link. S135 carries the post-translational modification Phosphoserine. K159 participates in a covalent cross-link: Glycyl lysine isopeptide (Lys-Gly) (interchain with G-Cter in SUMO2). N6-acetyllysine; alternate is present on K165. A Glycyl lysine isopeptide (Lys-Gly) (interchain with G-Cter in SUMO2); alternate cross-link involves residue K165. Residues K179 and K191 each participate in a glycyl lysine isopeptide (Lys-Gly) (interchain with G-Cter in SUMO2) cross-link. The stretch at 184 to 216 (SSELQTIKTELTQIKSNIDALLGRLEQIAEEQK) forms a coiled coil. Residues 214-226 (EQKANPDGKKKGD) show a composition bias toward basic and acidic residues. Residues 214 to 312 (EQKANPDGKK…DTDAEDGALQ (99 aa)) form a disordered region. The span at 228–253 (SSGGGGGSSGGGGSSNVGGGSSGGSG) shows a compositional bias: gly residues. Residue T268 is modified to Phosphothreonine. S270 is modified (phosphoserine). Residues T274 and T292 each carry the phosphothreonine modification. Residues 293–303 (HSEEELEHSQD) are compositionally biased toward basic and acidic residues. Phosphoserine is present on residues S294 and S301. At T304 the chain carries Phosphothreonine.

It belongs to the RRM HNRPC family. RALY subfamily. In terms of assembly, identified in the spliceosome C complex. Interacts (through its RNA-binding domain) with FUS (through its RNA-binding domain); both are components of the same RNPs. As to expression, widely expressed. Expressed in brain, testis, lung, spleen and kidney. Weakly expressed in liver.

It localises to the nucleus. RNA-binding protein that acts as a transcriptional cofactor for cholesterol biosynthetic genes in the liver. Binds the lipid-responsive non-coding RNA LeXis and is required for LeXis-mediated effect on cholesterogenesis. May be a heterogeneous nuclear ribonucleoprotein (hnRNP). The polypeptide is RNA-binding protein Raly (Raly) (Mus musculus (Mouse)).